A 318-amino-acid chain; its full sequence is Isoeugenol synthase 1 (318 aa).

NADP(+) is bound by residues 10–13 (TGYI), 32–43 (ARPLTPDSTPSS), Arg33, 84–86 (VPM), 109–111 (SEF), Lys131, and 151–153 (NCF). The active-site Proton donor/acceptor is the Lys131. Residue Pro260 coordinates substrate.

Belongs to the NmrA-type oxidoreductase family. Mostly expressed in petals, and, to a lower extent, in sepals, stamens and pistils.

The catalysed reaction is (E)-isoeugenol + acetate + NADP(+) = (E)-coniferyl acetate + NADPH. It functions in the pathway aromatic compound metabolism; phenylpropanoid biosynthesis. Functionally, catalyzes the synthesis of the phenylpropene isoeugenol from coniferyl acetate. Phenylpropenes are the primary constituents of various essential plant oils. They are produced as antimicrobial and antianimal compounds, or as floral attractants of pollinators. Isoeugenol is a characteristic aromatic constituent of spices and a floral volatile compound. This Clarkia breweri (Fairy fans) protein is Isoeugenol synthase 1.